A 184-amino-acid polypeptide reads, in one-letter code: Cytidylate kinase (184 aa).

8 to 16 (GQPGSGKTT) lines the ATP pocket.

This sequence belongs to the cytidylate kinase family. Type 2 subfamily.

It localises to the cytoplasm. The catalysed reaction is CMP + ATP = CDP + ADP. The enzyme catalyses dCMP + ATP = dCDP + ADP. The chain is Cytidylate kinase from Pyrobaculum aerophilum (strain ATCC 51768 / DSM 7523 / JCM 9630 / CIP 104966 / NBRC 100827 / IM2).